The following is a 111-amino-acid chain: Putative protein YddJ (111 aa).

In Escherichia coli (strain K12), this protein is Putative protein YddJ (yddJ).